Here is a 476-residue protein sequence, read N- to C-terminus: Serine/threonine-protein kinase WAG1 (476 aa).

In terms of domain architecture, Protein kinase spans F93–F400. ATP is bound by residues L99–V107 and K124. D219 functions as the Proton acceptor in the catalytic mechanism.

The protein belongs to the protein kinase superfamily. Ser/Thr protein kinase family. As to expression, expressed in root tips and lateral root primordia.

The protein localises to the cytoplasm. The protein resides in the cytosol. It catalyses the reaction L-seryl-[protein] + ATP = O-phospho-L-seryl-[protein] + ADP + H(+). The catalysed reaction is L-threonyl-[protein] + ATP = O-phospho-L-threonyl-[protein] + ADP + H(+). Its function is as follows. Serine/threonine-protein kinase involved in the regulation of auxin signaling. Acts as a positive regulator of cellular auxin efflux and regulates organ development by enhancing PIN-mediated polar auxin transport. Phosphorylates conserved serine residues in the PIN auxin efflux carriers. Phosphorylation of PIN proteins is required and sufficient for apical-basal PIN polarity that enables directional intercellular auxin fluxes, which mediate differential growth, tissue patterning and organogenesis. Acts as a suppressor of root waving. This Arabidopsis thaliana (Mouse-ear cress) protein is Serine/threonine-protein kinase WAG1 (WAG1).